A 463-amino-acid chain; its full sequence is Chromosomal replication initiator protein DnaA (463 aa).

A domain I, interacts with DnaA modulators region spans residues 1-83 (MSTNQIILTD…LQLFQHYNNT (83 aa)). The segment at 83-124 (TIKSIEIITKELPGTTQTVIELPTKTFADIGSSELNSENIFS) is domain II. The interval 125–343 (TLDVRFTFDN…GALNKVIAHS (219 aa)) is domain III, AAA+ region. The ATP site is built by glycine 171, glycine 173, lysine 174, and threonine 175. The interval 344–463 (NFTLKEITLE…INLLMKILQN (120 aa)) is domain IV, binds dsDNA.

It belongs to the DnaA family. Oligomerizes as a right-handed, spiral filament on DNA at oriC.

The protein resides in the cytoplasm. Its function is as follows. Plays an essential role in the initiation and regulation of chromosomal replication. ATP-DnaA binds to the origin of replication (oriC) to initiate formation of the DNA replication initiation complex once per cell cycle. Binds the DnaA box (a 9 base pair repeat at the origin) and separates the double-stranded (ds)DNA. Forms a right-handed helical filament on oriC DNA; dsDNA binds to the exterior of the filament while single-stranded (ss)DNA is stabiized in the filament's interior. The ATP-DnaA-oriC complex binds and stabilizes one strand of the AT-rich DNA unwinding element (DUE), permitting loading of DNA polymerase. After initiation quickly degrades to an ADP-DnaA complex that is not apt for DNA replication. Binds acidic phospholipids. The polypeptide is Chromosomal replication initiator protein DnaA (Rickettsia felis (strain ATCC VR-1525 / URRWXCal2) (Rickettsia azadi)).